A 410-amino-acid chain; its full sequence is DNA replication and repair protein RecF (410 aa).

30 to 37 lines the ATP pocket; sequence GPNGHGKT.

Belongs to the RecF family.

It is found in the cytoplasm. Functionally, the RecF protein is involved in DNA metabolism; it is required for DNA replication and normal SOS inducibility. RecF binds preferentially to single-stranded, linear DNA. It also seems to bind ATP. The chain is DNA replication and repair protein RecF from Rhodococcus opacus (strain B4).